The chain runs to 452 residues: Transcription factor AP-2-delta (452 aa).

Ser239 is subject to Phosphoserine; by PKA. The interval 280 to 410 is H-S-H (helix-span-helix), dimerization; sequence RRKAANVTLL…VLSEMLNYLE (131 aa). Residues 416 to 452 are disordered; the sequence is KNGGAADSGQGHANSEKAPLRKASEAAVKEGKTEKTD. The span at 429 to 452 shows a compositional bias: basic and acidic residues; sequence NSEKAPLRKASEAAVKEGKTEKTD.

The protein belongs to the AP-2 family. Binds DNA as a dimer. Can form homodimers or heterodimers with other AP-2 family members. In terms of tissue distribution, expressed in both embryonic and newborn brain.

Its subcellular location is the nucleus. In terms of biological role, sequence-specific DNA-binding protein that interacts with inducible viral and cellular enhancer elements to regulate transcription of selected genes. AP-2 factors bind to the consensus sequence 5'-GCCNNNGGC-3' and activate genes involved in a large spectrum of important biological functions including proper eye, face, body wall, limb and neural tube development. They also suppress a number of genes including MCAM/MUC18, C/EBP alpha and MYC. The sequence is that of Transcription factor AP-2-delta (Tfap2d) from Mus musculus (Mouse).